The chain runs to 72 residues: Small ribosomal subunit protein bS20 (72 aa).

It belongs to the bacterial ribosomal protein bS20 family.

Its function is as follows. Binds directly to 16S ribosomal RNA. The protein is Small ribosomal subunit protein bS20 (rpsT) of Aeromonas hydrophila.